The following is a 471-amino-acid chain: Zinc finger protein 385B (471 aa).

A required for induction of apoptosis region spans residues 1 to 93 (MNMANFLRGF…TGSTCHTTTL (93 aa)). The Matrin-type 1 zinc-finger motif lies at 34–64 (SFCEVCNIQLNSAAQAQVHSNGKSHRKRVKQ). Disordered regions lie at residues 50 to 92 (QVHS…HTTT) and 175 to 275 (HYKG…TVVE). A compositionally biased stretch (low complexity) spans 76–92 (ASPSSNSSTGSTCHTTT). The interaction with p53/TP53 stretch occupies residues 94-471 (PALVRTPTLM…TPASILFAPY (378 aa)). The segment at 157-187 (ISCNVCQLRFNSDSQAEAHYKGSKHAKKVKA) adopts a Matrin-type 2 zinc-finger fold. The segment covering 206–220 (ANPSCSITPITGNNS) has biased composition (polar residues). Residues 230-250 (KASSSSQPSSSESGSFLLKSG) are compositionally biased toward low complexity. The segment covering 260 to 269 (TSPSKSTNGA) has biased composition (polar residues). A Matrin-type 3 zinc finger spans residues 282 to 316 (KKLLYCSLCKVAVNSLSQLEAHNTGSKHKTMVEAR). The disordered stretch occupies residues 318–340 (GAGPIKSYPRPGSRLKMQNGSKG). A Matrin-type 4 zinc finger spans residues 348-378 (FHCEICDVHVNSEIQLKQHISSRRHKDRVAG).

In terms of assembly, interacts with p53/TP53; the interaction is direct. As to expression, detected in germinal center of lymph node (at protein level). Expressed in spleen, lymph node and tonsil.

Its subcellular location is the nucleus. In terms of biological role, may play a role in p53/TP53-mediated apoptosis. This chain is Zinc finger protein 385B (ZNF385B), found in Homo sapiens (Human).